Reading from the N-terminus, the 150-residue chain is Leukotriene C4 synthase (150 aa).

The Cytoplasmic segment spans residues 1-6; it reads MKDEVA. The chain crosses the membrane as a helical span at residues 7–27; the sequence is LLATVTLLGVLLQAYFSLQVI. The Lumenal portion of the chain corresponds to 28-48; it reads RARRAHRVSPPLTTGPPEFER. R30 contacts glutathione. R31 acts as the Proton donor in catalysis. A Phosphoserine modification is found at S36. Residues 49–69 traverse the membrane as a helical segment; the sequence is VYRAQVNCSEYFPLFLATLWV. Residues 51 to 55 and 58 to 59 each bind glutathione; these read RAQVN and EY. Topologically, residues 70–73 are cytoplasmic; that stretch reads AGVY. Residues 74 to 94 form a helical membrane-spanning segment; it reads FHEGAAALCGLVYLFTRLRYF. 93–97 lines the glutathione pocket; the sequence is YFWGY. Over 95–104 the chain is Lumenal; sequence WGYARSAQLR. R104 functions as the Proton acceptor in the catalytic mechanism. Residues 105–124 traverse the membrane as a helical segment; sequence LAPLYASARALWLLLALATL. Residues 125–150 are Cytoplasmic-facing; sequence GLLAHFLPAAARAALLRLLRALLRTA.

Belongs to the MAPEG family. In terms of assembly, homotrimer. Interacts with ALOX5AP and ALOX5. Phosphorylation at Ser-36 by RPS6KB1 inhibits the leukotriene-C4 synthase activity.

Its subcellular location is the nucleus outer membrane. It localises to the endoplasmic reticulum membrane. It is found in the nucleus membrane. The catalysed reaction is leukotriene C4 = leukotriene A4 + glutathione. The enzyme catalyses (13S,14S)-epoxy-(4Z,7Z,9E,11E,16Z,19Z)-docosahexaenoate + glutathione = (13R)-S-glutathionyl-(14S)-hydroxy-(4Z,7Z,9E,11E,16Z,19Z)-docosahexaenoate. It participates in lipid metabolism; leukotriene C4 biosynthesis. Its activity is regulated as follows. Inhibited by MK886. Its function is as follows. Catalyzes the conjugation of leukotriene A4 with reduced glutathione (GSH) to form leukotriene C4 with high specificity. Can also catalyze the transfer of a glutathionyl group from glutathione (GSH) to 13(S),14(S)-epoxy-docosahexaenoic acid to form maresin conjugate in tissue regeneration 1 (MCTR1), a bioactive lipid mediator that possess potent anti-inflammatory and proresolving actions. The sequence is that of Leukotriene C4 synthase (LTC4S) from Cavia porcellus (Guinea pig).